A 596-amino-acid chain; its full sequence is Elongation factor 4 (596 aa).

The region spanning 2–184 (KNIRNFAIIA…SIVKYIPPPE (183 aa)) is the tr-type G domain. GTP-binding positions include 14–19 (DHGKST) and 131–134 (NKID).

The protein belongs to the TRAFAC class translation factor GTPase superfamily. Classic translation factor GTPase family. LepA subfamily.

The protein localises to the cell inner membrane. It carries out the reaction GTP + H2O = GDP + phosphate + H(+). Functionally, required for accurate and efficient protein synthesis under certain stress conditions. May act as a fidelity factor of the translation reaction, by catalyzing a one-codon backward translocation of tRNAs on improperly translocated ribosomes. Back-translocation proceeds from a post-translocation (POST) complex to a pre-translocation (PRE) complex, thus giving elongation factor G a second chance to translocate the tRNAs correctly. Binds to ribosomes in a GTP-dependent manner. This is Elongation factor 4 from Neorickettsia sennetsu (strain ATCC VR-367 / Miyayama) (Ehrlichia sennetsu).